Consider the following 288-residue polypeptide: MKLSVYGKGGIGKSTTSCNISVALAKRGKKVLQIGCDPKHDSTFTLTGFLIPTIIDTLQEKDYHYEDIWPEDVIYKGYGGVDCVEAGGPPAGAGCGGYVVGETVKLLKELNAFDEYDVILFDVLGDVVCGGFAAPLNYSDYCMIVTDNGFDALFAANRIAASVREKARTHTLRLAGLIGNRTSKRDLINKYVEAVPMPVLEVLPLIEDIRVSRVKGKTLFEMAETDPSLQYVCNYYLNIADQILALPEGVVPSESPDRDLFALLSDFYLNPSKSHVMSEDEELDLMMV.

ATP is bound by residues 10-15 and lysine 39; that span reads GIGKST. Serine 14 provides a ligand contact to Mg(2+). [4Fe-4S] cluster-binding residues include cysteine 95 and cysteine 129. ATP is bound at residue 180-181; that stretch reads NR.

This sequence belongs to the NifH/BchL/ChlL family. As to quaternary structure, homodimer. Protochlorophyllide reductase is composed of three subunits; ChlL, ChlN and ChlB. It depends on [4Fe-4S] cluster as a cofactor.

The enzyme catalyses chlorophyllide a + oxidized 2[4Fe-4S]-[ferredoxin] + 2 ADP + 2 phosphate = protochlorophyllide a + reduced 2[4Fe-4S]-[ferredoxin] + 2 ATP + 2 H2O. Its pathway is porphyrin-containing compound metabolism; chlorophyll biosynthesis (light-independent). Its function is as follows. Component of the dark-operative protochlorophyllide reductase (DPOR) that uses Mg-ATP and reduced ferredoxin to reduce ring D of protochlorophyllide (Pchlide) to form chlorophyllide a (Chlide). This reaction is light-independent. The L component serves as a unique electron donor to the NB-component of the complex, and binds Mg-ATP. The polypeptide is Light-independent protochlorophyllide reductase iron-sulfur ATP-binding protein (Trichodesmium erythraeum (strain IMS101)).